The following is a 243-amino-acid chain: Pyridoxine 5'-phosphate synthase (243 aa).

Residue asparagine 9 coordinates 3-amino-2-oxopropyl phosphate. 11–12 (DH) contributes to the 1-deoxy-D-xylulose 5-phosphate binding site. Arginine 20 contributes to the 3-amino-2-oxopropyl phosphate binding site. Histidine 45 (proton acceptor) is an active-site residue. 1-deoxy-D-xylulose 5-phosphate-binding residues include arginine 47 and histidine 52. The active-site Proton acceptor is glutamate 72. A 1-deoxy-D-xylulose 5-phosphate-binding site is contributed by threonine 102. Residue histidine 193 is the Proton donor of the active site. 3-amino-2-oxopropyl phosphate-binding positions include glycine 194 and 215–216 (GH).

Belongs to the PNP synthase family. In terms of assembly, homooctamer; tetramer of dimers.

It localises to the cytoplasm. The catalysed reaction is 3-amino-2-oxopropyl phosphate + 1-deoxy-D-xylulose 5-phosphate = pyridoxine 5'-phosphate + phosphate + 2 H2O + H(+). The protein operates within cofactor biosynthesis; pyridoxine 5'-phosphate biosynthesis; pyridoxine 5'-phosphate from D-erythrose 4-phosphate: step 5/5. In terms of biological role, catalyzes the complicated ring closure reaction between the two acyclic compounds 1-deoxy-D-xylulose-5-phosphate (DXP) and 3-amino-2-oxopropyl phosphate (1-amino-acetone-3-phosphate or AAP) to form pyridoxine 5'-phosphate (PNP) and inorganic phosphate. The protein is Pyridoxine 5'-phosphate synthase of Photobacterium profundum (strain SS9).